Reading from the N-terminus, the 350-residue chain is Phosphotriesterase-related protein (350 aa).

Residues H22, H24, E169, H201, H230, and D298 each coordinate a divalent metal cation.

It belongs to the metallo-dependent hydrolases superfamily. Phosphotriesterase family. The cofactor is a divalent metal cation.

This is Phosphotriesterase-related protein from Drosophila sechellia (Fruit fly).